Reading from the N-terminus, the 752-residue chain is Maltodextrin phosphorylase (752 aa).

An N6-(pyridoxal phosphate)lysine modification is found at Lys-603.

The protein belongs to the glycogen phosphorylase family. Pyridoxal 5'-phosphate is required as a cofactor.

It catalyses the reaction [(1-&gt;4)-alpha-D-glucosyl](n) + phosphate = [(1-&gt;4)-alpha-D-glucosyl](n-1) + alpha-D-glucose 1-phosphate. Its function is as follows. Phosphorylase is an important allosteric enzyme in carbohydrate metabolism. Enzymes from different sources differ in their regulatory mechanisms and in their natural substrates. However, all known phosphorylases share catalytic and structural properties. The chain is Maltodextrin phosphorylase (malP) from Streptococcus pneumoniae serotype 4 (strain ATCC BAA-334 / TIGR4).